Here is a 130-residue protein sequence, read N- to C-terminus: Anti-adapter protein IraD (130 aa).

This sequence belongs to the GpW/Gp25 family. IraD subfamily. As to quaternary structure, interacts with RssB.

It is found in the cytoplasm. Functionally, inhibits RpoS proteolysis by regulating RssB activity, thereby increasing the stability of the sigma stress factor RpoS during oxidative stress. Its effect on RpoS stability is due to its interaction with RssB, which probably blocks the interaction of RssB with RpoS, and the consequent delivery of the RssB-RpoS complex to the ClpXP protein degradation pathway. The sequence is that of Anti-adapter protein IraD from Escherichia coli O45:K1 (strain S88 / ExPEC).